Consider the following 212-residue polypeptide: Ribonuclease HII (212 aa).

Positions 20–209 (TCVVGVDEVG…VHNILYQEAS (190 aa)) constitute an RNase H type-2 domain. 3 residues coordinate a divalent metal cation: aspartate 26, glutamate 27, and aspartate 117.

The protein belongs to the RNase HII family. It depends on Mn(2+) as a cofactor. Requires Mg(2+) as cofactor.

It is found in the cytoplasm. The enzyme catalyses Endonucleolytic cleavage to 5'-phosphomonoester.. Functionally, endonuclease that specifically degrades the RNA of RNA-DNA hybrids. The sequence is that of Ribonuclease HII from Cereibacter sphaeroides (strain ATCC 17029 / ATH 2.4.9) (Rhodobacter sphaeroides).